A 390-amino-acid chain; its full sequence is ATP-sensitive inward rectifier potassium channel 11 (390 aa).

Residues 1–65 (MLSRKGIIPE…LQDVFTTLVD (65 aa)) lie on the Cytoplasmic side of the membrane. ATP contacts are provided by N48 and R50. The chain crosses the membrane as a helical span at residues 66–92 (LKWPHTLLIFTMSFLCSWLLFAMVWWL). The Extracellular portion of the chain corresponds to 93-116 (IAFAHGDLAPGEGTNVPCVTSIHS). The cysteines at positions 110 and 142 are disulfide-linked. The segment at residues 117–133 (FSSAFLFSIEVQVTIGF) is an intramembrane region (discontinuously helical; Pore-forming). The K(+) site is built by T130 and F133. Positions 130–135 (TIGFGG) match the Selectivity filter motif. Over 134–142 (GGRMVTEEC) the chain is Extracellular. A helical transmembrane segment spans residues 143-171 (PLAILILIVQNIVGLMINAIMLGCIFMKT). At 172-390 (AQAHRRAETL…KFSISPDSLS (219 aa)) the chain is on the cytoplasmic side. R176 is a binding site for a 1,2-diacyl-sn-glycero-3-phospho-(1D-myo-inositol-4,5-bisphosphate). Y330 contacts ATP. T341 is modified (phosphothreonine; by MAPK1). A Phosphoserine; by MAPK1 modification is found at S385.

Belongs to the inward rectifier-type potassium channel (TC 1.A.2.1) family. KCNJ11 subfamily. Homotetramer; the homotetramer binds four ATP molecules (one ATP per subunit). Forms an heterooctamer with ABCC8/SUR1; one KCNJ11 homotetramer interacts with four ABCC8/SUR1 molecules. Interacts with ABCC9/SUR2. In terms of processing, phosphorylation by MAPK1 results in changes in channel gating that destabilize the closed states and reduce the ATP sensitivity.

It is found in the membrane. The catalysed reaction is K(+)(in) = K(+)(out). KATP channels are regulated by cytoplasmic ATP/ADP ratios; ATP inhibits the channel by closing the pore, while ADP activates the channel. Activated by phosphatidylinositol 4,5-biphosphate (PtdIns(4,5)P2). Functionally, inward rectifier potassium channel that forms the pore of ATP-sensitive potassium channels (KATP), regulating potassium permeability as a function of cytoplasmic ATP and ADP concentrations in many different cells. Inward rectifier potassium channels are characterized by a greater tendency to allow potassium to flow into the cell rather than out of it. Their voltage dependence is regulated by the concentration of extracellular potassium; as external potassium is raised, the voltage range of the channel opening shifts to more positive voltages. The inward rectification is mainly due to the blockage of outward current by internal magnesium. Can be blocked by extracellular barium. In pancreatic cells, it forms KATP channels with ABCC8/SUR1. Can form cardiac and smooth muscle-type KATP channels with ABCC9. The protein is ATP-sensitive inward rectifier potassium channel 11 (Kcnj11) of Mus musculus (Mouse).